Here is a 576-residue protein sequence, read N- to C-terminus: Dihydroxy-acid dehydratase (576 aa).

Residue cysteine 56 participates in [2Fe-2S] cluster binding. Residue aspartate 88 coordinates Mg(2+). Cysteine 129 is a [2Fe-2S] cluster binding site. Mg(2+) contacts are provided by aspartate 130 and lysine 131. Lysine 131 is subject to N6-carboxylysine. A [2Fe-2S] cluster-binding site is contributed by cysteine 201. Glutamate 453 serves as a coordination point for Mg(2+). Catalysis depends on serine 479, which acts as the Proton acceptor.

The protein belongs to the IlvD/Edd family. As to quaternary structure, homodimer. [2Fe-2S] cluster serves as cofactor. Mg(2+) is required as a cofactor.

It carries out the reaction (2R)-2,3-dihydroxy-3-methylbutanoate = 3-methyl-2-oxobutanoate + H2O. The catalysed reaction is (2R,3R)-2,3-dihydroxy-3-methylpentanoate = (S)-3-methyl-2-oxopentanoate + H2O. It participates in amino-acid biosynthesis; L-isoleucine biosynthesis; L-isoleucine from 2-oxobutanoate: step 3/4. It functions in the pathway amino-acid biosynthesis; L-valine biosynthesis; L-valine from pyruvate: step 3/4. Its function is as follows. Functions in the biosynthesis of branched-chain amino acids. Catalyzes the dehydration of (2R,3R)-2,3-dihydroxy-3-methylpentanoate (2,3-dihydroxy-3-methylvalerate) into 2-oxo-3-methylpentanoate (2-oxo-3-methylvalerate) and of (2R)-2,3-dihydroxy-3-methylbutanoate (2,3-dihydroxyisovalerate) into 2-oxo-3-methylbutanoate (2-oxoisovalerate), the penultimate precursor to L-isoleucine and L-valine, respectively. The chain is Dihydroxy-acid dehydratase from Parvibaculum lavamentivorans (strain DS-1 / DSM 13023 / NCIMB 13966).